A 274-amino-acid chain; its full sequence is Peroxiredoxin-4 (274 aa).

The first 40 residues, 1-40 (MEARSKLLDGTTASRRWTRKLVLLLPPLLLFLLRTESLQG), serve as a signal peptide directing secretion. Positions 82–240 (AKISKPAPYW…TLRLVQAFQY (159 aa)) constitute a Thioredoxin domain. Cys-127 functions as the Cysteine sulfenic acid (-SOH) intermediate in the catalytic mechanism.

The protein belongs to the peroxiredoxin family. AhpC/Prx1 subfamily. Homodimer; disulfide-linked, upon oxidation. 5 homodimers assemble to form a ring-like decamer. The enzyme can be inactivated by further oxidation of the cysteine sulfenic acid (C(P)-SOH) to sulphinic acid (C(P)-SO2H) and sulphonic acid (C(P)-SO3H) instead of its condensation to a disulfide bond.

It is found in the cytoplasm. It localises to the endoplasmic reticulum. It carries out the reaction a hydroperoxide + [thioredoxin]-dithiol = an alcohol + [thioredoxin]-disulfide + H2O. Thiol-specific peroxidase that catalyzes the reduction of hydrogen peroxide and organic hydroperoxides to water and alcohols, respectively. Plays a role in cell protection against oxidative stress by detoxifying peroxides and as sensor of hydrogen peroxide-mediated signaling events. Regulates the activation of NF-kappa-B in the cytosol by a modulation of I-kappa-B-alpha phosphorylation. This Mus musculus (Mouse) protein is Peroxiredoxin-4 (Prdx4).